The primary structure comprises 1794 residues: MILKSFLLGNLLSLCMKIRNSVVVVGLYYGFITTFSIGPSYLFLLRARVMEEGTEKEVSATTGFIMGQFMMLISIYYTPLHLALGRPHTITVLVLPYLLFHFFWNNHKHFFSYRSTTRNSMRNLSIQCVFLNNLIFQLFNHFILPSSTLARLVNIYMFRCNNKMLFVTSSFVGWLIGHILFMKWVGLVLFWIRQNHSIRSNKYIKYLVSELRKSMARILSILLFITCVYYLGRIPSPIFTKKLKETSETGETEEETDVEIERTSETKGTEQEKEGSTEEDPSLFCSEEKGDPDKIDEREGVNGKEKTKDHFNLKERWYNNKTVYRDQEDNTAYGDGNQEDWELKALKLKEEKKLFWFEKPFITFLFDYQRWNRPFRYIENDQFANTVRNEMSQYFFNTCPSDGKRVISFTYPPSLSVFGEMIQKKMSLCGMKELYPKDKNLYNHWVSTNEQKRDKVSKEFINRIEALYGGDIVLQKRVRLCNDRDEKECLPKMSDPFLNGSYRGTIKELYSNSIINDPITSTYNSGEKFWINRIHSLLFCDLNDQAIRNKSSEIQEIKKKIPQRLYRLTTDLEQDEGEDERESVEFPEIRSRKTKHMVIYADNEENTNIFTHTGAGTTYDPENDQMEEVDVIRYTQKPDFRRDLIKGSMRAQRRKTVTWEMLQINLHSPLFLDRIDKNPFFYFDISRIINLIFRDWTKKKPEFQTSNFKEETKKEDEIEETWETIAFGQVIRGFLLVTQSILRKYIVLPSLIIAKNLVRMLLFQLPEWYEDFKEWSREMHIKCTYHGVQLSERKFPKNWLKAGIQIKILFPFYLKPWRKSKLRSHHIDHPMKKRKKQNSCFLTVWGMETDLPFGPARKGPSFFEPIHKELEKKFKKGKKKWFLFVRIFKEKKIWVIKRVLFIKGVMKELTKANPVFLFGLKRVYDGSENRKDSISNNKTISESPIRKSPIRTGSMDWTNSSLTERKRKDLSDKTTTIRDQIERIRITRDKKTNFLTIDMNISPNETSYSDKRSESQKPIWQVSKRRSTRLLYKWRYFMKSFIERIHRNVFLCMINLPRINTQLFLESTKKIIDKYISNDEKNQSGIDEKNKKKIHFIFISTRKLLSTISNKKTNNSKIHCSLSQAYVFYKLSQKPGIKKYRLGSLFQYRRAYSIKDRIKDYLEIERIFHSESKHKKPGNFGMNEWKNWLIGNYQYNFSYTRWSRLDPQKWRNKVNEQCMIKNKDSKKTDSYSYEKDPLINHERHILYSADLLQNHKKKLSKRYRYDLLSYRYINFGNNSSIYRSLLQVNEEQRILILSSHSHIIHKYEQLNLPAISDYLEERFIVDMEKKTDRKYFDLRIIKFWSRRNTNTDMDLRINTNKKNNTGTNYYQMIDKKDLIYLTSYQEIYPRNKENNFFDWMGMNEELLYRRISNLALWFFPELVLLNDAYKTKPWTIPIRLLLFNGKKKITETQKMNENKKRDLGILSNQKKYLELGTRDREEKKWWDQEDLRPDTKYQEYFGSDVKNQKDVELDVWYREGKSREQEDYTDINKSRKKKQSKSNKEAELDLLLKRYLLFQFRWDDSLKKKMINNIKLYSLLLRLMDPKKIVISSIQRGEMWLDIMLIHKDLPLTKLKKGGVFTMEPLRLSRKWNGQFLMYQTLSISLVHKIKQQTDRRYRETKYIDENFFDLFIPRNGRVFVNGDNKNYDLFVPENISALRRRRELRILSRLNPGKGNINIIFSNRKKIQNCKPFLDRGKHLETDTNKAIKFKLFLWPNHRLEDLACMNRYWFDTNNGTRFSMSRIRMYPRFGIS.

The next 6 membrane-spanning stretches (helical) occupy residues 23–43 (VVVGLYYGFITTFSIGPSYLF), 64–84 (FIMGQFMMLISIYYTPLHLAL), 87–107 (PHTITVLVLPYLLFHFFWNNH), 124–144 (LSIQCVFLNNLIFQLFNHFIL), 172–192 (VGWLIGHILFMKWVGLVLFWI), and 218–238 (ILSILLFITCVYYLGRIPSPI). Positions 244–307 (KETSETGETE…REGVNGKEKT (64 aa)) are disordered. The segment covering 248-258 (ETGETEEETDV) has biased composition (acidic residues). Composition is skewed to basic and acidic residues over residues 259–276 (EIERTSETKGTEQEKEGS) and 286–307 (SEEKGDPDKIDEREGVNGKEKT).

This sequence belongs to the TIC214 family. Part of the Tic complex.

The protein resides in the plastid. It localises to the chloroplast inner membrane. In terms of biological role, involved in protein precursor import into chloroplasts. May be part of an intermediate translocation complex acting as a protein-conducting channel at the inner envelope. In Amborella trichopoda, this protein is Protein TIC 214.